Here is a 399-residue protein sequence, read N- to C-terminus: UDP-N-acetylglucosamine--N-acetylmuramyl-(pentapeptide) pyrophosphoryl-undecaprenol N-acetylglucosamine transferase (399 aa).

Positions 1-21 (MTSRFGHSHHPRRGRSARARA) are enriched in basic residues. The disordered stretch occupies residues 1-30 (MTSRFGHSHHPRRGRSARARAGRREGVQSN). UDP-N-acetyl-alpha-D-glucosamine contacts are provided by residues 58 to 60 (TGG), Asn170, Arg206, Ser234, Ile288, and Gln333.

It belongs to the glycosyltransferase 28 family. MurG subfamily.

It is found in the cell inner membrane. It catalyses the reaction di-trans,octa-cis-undecaprenyl diphospho-N-acetyl-alpha-D-muramoyl-L-alanyl-D-glutamyl-meso-2,6-diaminopimeloyl-D-alanyl-D-alanine + UDP-N-acetyl-alpha-D-glucosamine = di-trans,octa-cis-undecaprenyl diphospho-[N-acetyl-alpha-D-glucosaminyl-(1-&gt;4)]-N-acetyl-alpha-D-muramoyl-L-alanyl-D-glutamyl-meso-2,6-diaminopimeloyl-D-alanyl-D-alanine + UDP + H(+). It participates in cell wall biogenesis; peptidoglycan biosynthesis. In terms of biological role, cell wall formation. Catalyzes the transfer of a GlcNAc subunit on undecaprenyl-pyrophosphoryl-MurNAc-pentapeptide (lipid intermediate I) to form undecaprenyl-pyrophosphoryl-MurNAc-(pentapeptide)GlcNAc (lipid intermediate II). The chain is UDP-N-acetylglucosamine--N-acetylmuramyl-(pentapeptide) pyrophosphoryl-undecaprenol N-acetylglucosamine transferase from Acidovorax ebreus (strain TPSY) (Diaphorobacter sp. (strain TPSY)).